The sequence spans 351 residues: Cytochrome c biogenesis protein CcsA (351 aa).

The next 8 helical transmembrane spans lie at N12–P32, L37–G57, I68–I88, L97–L117, M143–I163, I259–N279, W294–W314, and A320–L340.

It belongs to the CcmF/CycK/Ccl1/NrfE/CcsA family. In terms of assembly, may interact with ccs1.

It localises to the cellular thylakoid membrane. Functionally, required during biogenesis of c-type cytochromes (cytochrome c6 and cytochrome f) at the step of heme attachment. This is Cytochrome c biogenesis protein CcsA from Trichodesmium erythraeum (strain IMS101).